Here is a 107-residue protein sequence, read N- to C-terminus: Large ribosomal subunit protein uL24 (107 aa).

The protein belongs to the universal ribosomal protein uL24 family. In terms of assembly, part of the 50S ribosomal subunit.

Functionally, one of two assembly initiator proteins, it binds directly to the 5'-end of the 23S rRNA, where it nucleates assembly of the 50S subunit. Its function is as follows. One of the proteins that surrounds the polypeptide exit tunnel on the outside of the subunit. In Carboxydothermus hydrogenoformans (strain ATCC BAA-161 / DSM 6008 / Z-2901), this protein is Large ribosomal subunit protein uL24.